The primary structure comprises 571 residues: Proline--tRNA ligase (571 aa).

It belongs to the class-II aminoacyl-tRNA synthetase family. ProS type 1 subfamily. Homodimer.

It is found in the cytoplasm. It carries out the reaction tRNA(Pro) + L-proline + ATP = L-prolyl-tRNA(Pro) + AMP + diphosphate. Functionally, catalyzes the attachment of proline to tRNA(Pro) in a two-step reaction: proline is first activated by ATP to form Pro-AMP and then transferred to the acceptor end of tRNA(Pro). As ProRS can inadvertently accommodate and process non-cognate amino acids such as alanine and cysteine, to avoid such errors it has two additional distinct editing activities against alanine. One activity is designated as 'pretransfer' editing and involves the tRNA(Pro)-independent hydrolysis of activated Ala-AMP. The other activity is designated 'posttransfer' editing and involves deacylation of mischarged Ala-tRNA(Pro). The misacylated Cys-tRNA(Pro) is not edited by ProRS. The chain is Proline--tRNA ligase from Actinobacillus pleuropneumoniae serotype 3 (strain JL03).